Here is a 320-residue protein sequence, read N- to C-terminus: Protease HtpX homolog (320 aa).

2 consecutive transmembrane segments (helical) span residues 6-26 and 28-48; these read TAML…LIGG and AGMM…YWNS. Zn(2+) is bound at residue H130. The active site involves E131. H134 is a binding site for Zn(2+). 2 helical membrane-spanning segments follow: residues 145–165 and 173–193; these read ITAT…FFGG and PLGF…AMLV. E202 lines the Zn(2+) pocket. Residues 281 to 320 are disordered; it reads GGMNVSTPPVRAANPSRKSRSVPDTGLGRGGSQPPKGPWS.

It belongs to the peptidase M48B family. Zn(2+) serves as cofactor.

It localises to the cell inner membrane. The protein is Protease HtpX homolog of Rhizobium leguminosarum bv. trifolii (strain WSM2304).